Here is a 331-residue protein sequence, read N- to C-terminus: Probable 5-dehydro-4-deoxyglucarate dehydratase 2 (331 aa).

The disordered stretch occupies residues Met-1–Thr-23. Positions Asp-10–Thr-23 are enriched in low complexity.

It belongs to the DapA family.

The catalysed reaction is 5-dehydro-4-deoxy-D-glucarate + H(+) = 2,5-dioxopentanoate + CO2 + H2O. It participates in carbohydrate acid metabolism; D-glucarate degradation; 2,5-dioxopentanoate from D-glucarate: step 2/2. This is Probable 5-dehydro-4-deoxyglucarate dehydratase 2 from Streptomyces avermitilis (strain ATCC 31267 / DSM 46492 / JCM 5070 / NBRC 14893 / NCIMB 12804 / NRRL 8165 / MA-4680).